The sequence spans 227 residues: Phosphoglycolate phosphatase (227 aa).

The Nucleophile role is filled by D14. Mg(2+)-binding residues include D14, D16, and D177.

The protein belongs to the HAD-like hydrolase superfamily. CbbY/CbbZ/Gph/YieH family. The cofactor is Mg(2+).

The enzyme catalyses 2-phosphoglycolate + H2O = glycolate + phosphate. It functions in the pathway organic acid metabolism; glycolate biosynthesis; glycolate from 2-phosphoglycolate: step 1/1. In terms of biological role, specifically catalyzes the dephosphorylation of 2-phosphoglycolate. Is involved in the dissimilation of the intracellular 2-phosphoglycolate formed during the DNA repair of 3'-phosphoglycolate ends, a major class of DNA lesions induced by oxidative stress. This chain is Phosphoglycolate phosphatase, found in Thiobacillus denitrificans (strain ATCC 25259 / T1).